Consider the following 305-residue polypeptide: tRNA pseudouridine synthase B (305 aa).

The active-site Nucleophile is the aspartate 48.

Belongs to the pseudouridine synthase TruB family. Type 1 subfamily.

It carries out the reaction uridine(55) in tRNA = pseudouridine(55) in tRNA. Responsible for synthesis of pseudouridine from uracil-55 in the psi GC loop of transfer RNAs. The sequence is that of tRNA pseudouridine synthase B from Actinobacillus pleuropneumoniae serotype 5b (strain L20).